Consider the following 217-residue polypeptide: Probable transaldolase (217 aa).

The Schiff-base intermediate with substrate role is filled by lysine 83.

This sequence belongs to the transaldolase family. Type 3B subfamily.

It localises to the cytoplasm. The enzyme catalyses D-sedoheptulose 7-phosphate + D-glyceraldehyde 3-phosphate = D-erythrose 4-phosphate + beta-D-fructose 6-phosphate. Its pathway is carbohydrate degradation; pentose phosphate pathway; D-glyceraldehyde 3-phosphate and beta-D-fructose 6-phosphate from D-ribose 5-phosphate and D-xylulose 5-phosphate (non-oxidative stage): step 2/3. Functionally, transaldolase is important for the balance of metabolites in the pentose-phosphate pathway. In Clostridium botulinum (strain Okra / Type B1), this protein is Probable transaldolase.